The primary structure comprises 111 residues: UPF0122 protein YofM (111 aa).

The protein belongs to the UPF0122 family.

Functionally, might take part in the signal recognition particle (SRP) pathway. This is inferred from the conservation of its genetic proximity to ftsY/ffh. May be a regulatory protein. This Lactococcus lactis subsp. lactis (strain IL1403) (Streptococcus lactis) protein is UPF0122 protein YofM (yofM).